The sequence spans 245 residues: Aliphatic sulfonates import ATP-binding protein SsuB (245 aa).

Residues 6 to 225 (VTVRGLRRAF…SRGDEGFDDL (220 aa)) enclose the ABC transporter domain. Residue 38 to 45 (GLSGSGKS) coordinates ATP.

Belongs to the ABC transporter superfamily. Aliphatic sulfonates importer (TC 3.A.1.17.2) family. As to quaternary structure, the complex is composed of two ATP-binding proteins (SsuB), two transmembrane proteins (SsuC) and a solute-binding protein (SsuA).

The protein localises to the cell membrane. The enzyme catalyses ATP + H2O + aliphatic sulfonate-[sulfonate-binding protein]Side 1 = ADP + phosphate + aliphatic sulfonateSide 2 + [sulfonate-binding protein]Side 1.. In terms of biological role, part of the ABC transporter complex SsuABC involved in aliphatic sulfonates import. Responsible for energy coupling to the transport system. The polypeptide is Aliphatic sulfonates import ATP-binding protein SsuB (Mycobacterium sp. (strain MCS)).